Here is an 89-residue protein sequence, read N- to C-terminus: Small ribosomal subunit protein uS15 (89 aa).

The protein belongs to the universal ribosomal protein uS15 family. As to quaternary structure, part of the 30S ribosomal subunit. Forms a bridge to the 50S subunit in the 70S ribosome, contacting the 23S rRNA.

Its function is as follows. One of the primary rRNA binding proteins, it binds directly to 16S rRNA where it helps nucleate assembly of the platform of the 30S subunit by binding and bridging several RNA helices of the 16S rRNA. Forms an intersubunit bridge (bridge B4) with the 23S rRNA of the 50S subunit in the ribosome. In Rhizobium leguminosarum bv. trifolii (strain WSM2304), this protein is Small ribosomal subunit protein uS15.